Reading from the N-terminus, the 479-residue chain is Muscarinic acetylcholine receptor M4 (479 aa).

The Extracellular portion of the chain corresponds to 1-31; that stretch reads MANFTPVNGSSGNQSVRLVTSSSHNRYETVE. Residues asparagine 8 and asparagine 13 are each glycosylated (N-linked (GlcNAc...) asparagine). A helical membrane pass occupies residues 32 to 54; that stretch reads MVFIATVTGSLSLVTVVGNILVM. The Cytoplasmic portion of the chain corresponds to 55–68; sequence LSIKVNRQLQTVNN. Residues 69-89 form a helical membrane-spanning segment; sequence YFLFSLACADLIIGAFSMNLY. Residues 90–106 are Extracellular-facing; it reads TVYIIKGYWPLGAVVCD. An intrachain disulfide couples cysteine 105 to cysteine 185. A helical membrane pass occupies residues 107-128; sequence LWLALDYVVSNASVMNLLIISF. At 129 to 148 the chain is on the cytoplasmic side; the sequence is DRYFCVTKPLTYPARRTTKM. Residues 149 to 171 traverse the membrane as a helical segment; sequence AGLMIAAAWVLSFVLWAPAILFW. Topologically, residues 172-193 are extracellular; sequence QFVVGKRTVPDNQCFIQFLSNP. Residues 194–216 traverse the membrane as a helical segment; that stretch reads AVTFGTAIAAFYLPVVIMTVLYI. The Cytoplasmic segment spans residues 217 to 401; it reads HISLASRSRV…AARERKVTRT (185 aa). Positions 271-333 are disordered; it reads KLEEAPPPAL…PAPPLQPRAL (63 aa). Residues 275 to 286 are compositionally biased toward pro residues; sequence APPPALPPPPRP. Polar residues predominate over residues 294-304; sequence NESSSGSATQN. A helical transmembrane segment spans residues 402 to 422; it reads IFAILLAFILTWTPYNVMVLV. The Extracellular portion of the chain corresponds to 423–436; sequence NTFCQSCIPDTVWS. The helical transmembrane segment at 437–456 threads the bilayer; the sequence is IGYWLCYVNSTINPACYALC. The Cytoplasmic portion of the chain corresponds to 457-479; the sequence is NATFKKTFRHLLLCQYRNIGTAR. Phosphothreonine is present on residues threonine 459, threonine 463, and threonine 477.

This sequence belongs to the G-protein coupled receptor 1 family. Muscarinic acetylcholine receptor subfamily. CHRM4 sub-subfamily.

The protein resides in the cell membrane. It localises to the postsynaptic cell membrane. Its function is as follows. The muscarinic acetylcholine receptor mediates various cellular responses, including inhibition of adenylate cyclase, breakdown of phosphoinositides and modulation of potassium channels through the action of G proteins. Primary transducing effect is inhibition of adenylate cyclase. The protein is Muscarinic acetylcholine receptor M4 (CHRM4) of Homo sapiens (Human).